We begin with the raw amino-acid sequence, 620 residues long: bZIP transcription factor 49 (620 aa).

The Cytoplasmic portion of the chain corresponds to Met1 to Val287. The span at Ser109–Asp135 shows a compositional bias: polar residues. Residues Ser109–Gly155 form a disordered region. The 64-residue stretch at Glu172–Arg235 folds into the bZIP domain. Positions Lys173 to Lys205 are basic motif. The tract at residues Ile211 to Met218 is leucine-zipper. Residues Ala288 to Ile308 form a helical membrane-spanning segment. Residues Ser309–Ser620 are Lumenal-facing. Disordered stretches follow at residues Asp343–Ser364, Ala398–Gln460, and Pro505–Lys557. N-linked (GlcNAc...) asparagine glycans are attached at residues Asn351 and Asn363. The span at Val352–Ser364 shows a compositional bias: polar residues. Composition is skewed to basic and acidic residues over residues Ala398–Lys409 and Arg432–Tyr441. 2 stretches are compositionally biased toward polar residues: residues Gly447 to Gln460 and Pro508 to Thr519. Asn515 carries N-linked (GlcNAc...) asparagine glycosylation. Positions Arg526–Leu529 match the RRIL cleavage motif motif. Asn539 and Asn546 each carry an N-linked (GlcNAc...) asparagine glycan. Residues Leu540–Lys557 show a composition bias toward basic and acidic residues.

It belongs to the bZIP family. In terms of assembly, interacts with BZIP28.

It is found in the endoplasmic reticulum membrane. Its subcellular location is the nucleus. In terms of biological role, transcriptional activator involved in stress responses. The chain is bZIP transcription factor 49 from Arabidopsis thaliana (Mouse-ear cress).